The following is a 187-amino-acid chain: Pyridoxal 5'-phosphate synthase subunit PdxT (187 aa).

Position 47–49 (47–49 (GES)) interacts with L-glutamine. Cys-76 functions as the Nucleophile in the catalytic mechanism. Residues Arg-102 and 128–129 (IR) contribute to the L-glutamine site. Residues His-165 and Glu-167 each act as charge relay system in the active site.

Belongs to the glutaminase PdxT/SNO family. In terms of assembly, in the presence of PdxS, forms a dodecamer of heterodimers. Only shows activity in the heterodimer.

The enzyme catalyses aldehydo-D-ribose 5-phosphate + D-glyceraldehyde 3-phosphate + L-glutamine = pyridoxal 5'-phosphate + L-glutamate + phosphate + 3 H2O + H(+). It carries out the reaction L-glutamine + H2O = L-glutamate + NH4(+). Its pathway is cofactor biosynthesis; pyridoxal 5'-phosphate biosynthesis. Functionally, catalyzes the hydrolysis of glutamine to glutamate and ammonia as part of the biosynthesis of pyridoxal 5'-phosphate. The resulting ammonia molecule is channeled to the active site of PdxS. The chain is Pyridoxal 5'-phosphate synthase subunit PdxT from Methanococcus maripaludis (strain C5 / ATCC BAA-1333).